The sequence spans 57 residues: Metallothionein-2 (57 aa).

The segment at 1-28 is beta; sequence PDPCCNDKCDCKEGECKTGCKCTSCRCP. Residues Cys-4, Cys-5, Cys-9, Cys-11, Cys-16, Cys-20, Cys-22, Cys-25, Cys-27, Cys-30, Cys-33, Cys-37, Cys-39, Cys-45, Cys-49, Cys-53, Cys-55, and Cys-56 each coordinate a divalent metal cation. Residues 29 to 57 form an alpha region; that stretch reads PCEQCSSGCKCANKEDCRKTCSKPCSCCP.

This sequence belongs to the metallothionein superfamily. Type 3 family.

Functionally, metallothioneins have a high content of cysteine residues that bind various heavy metals. Class I MTS in marine crustacea are involved in the sequestration of elevated levels of heavy-metal ions. The chain is Metallothionein-2 from Scylla serrata (Mud crab).